The sequence spans 208 residues: ATP-dependent Clp protease proteolytic subunit 2 (208 aa).

Residue S102 is the Nucleophile of the active site. Residue H127 is part of the active site.

This sequence belongs to the peptidase S14 family. In terms of assembly, fourteen ClpP subunits assemble into 2 heptameric rings which stack back to back to give a disk-like structure with a central cavity, resembling the structure of eukaryotic proteasomes.

Its subcellular location is the cytoplasm. The enzyme catalyses Hydrolysis of proteins to small peptides in the presence of ATP and magnesium. alpha-casein is the usual test substrate. In the absence of ATP, only oligopeptides shorter than five residues are hydrolyzed (such as succinyl-Leu-Tyr-|-NHMec, and Leu-Tyr-Leu-|-Tyr-Trp, in which cleavage of the -Tyr-|-Leu- and -Tyr-|-Trp bonds also occurs).. In terms of biological role, cleaves peptides in various proteins in a process that requires ATP hydrolysis. Has a chymotrypsin-like activity. Plays a major role in the degradation of misfolded proteins. This chain is ATP-dependent Clp protease proteolytic subunit 2, found in Chelativorans sp. (strain BNC1).